We begin with the raw amino-acid sequence, 137 residues long: ATP synthase epsilon chain, chloroplastic (137 aa).

The protein belongs to the ATPase epsilon chain family. F-type ATPases have 2 components, CF(1) - the catalytic core - and CF(0) - the membrane proton channel. CF(1) has five subunits: alpha(3), beta(3), gamma(1), delta(1), epsilon(1). CF(0) has three main subunits: a, b and c.

The protein localises to the plastid. It is found in the chloroplast thylakoid membrane. Produces ATP from ADP in the presence of a proton gradient across the membrane. This Medicago sativa (Alfalfa) protein is ATP synthase epsilon chain, chloroplastic.